Reading from the N-terminus, the 504-residue chain is Deoxyguanosinetriphosphate triphosphohydrolase (504 aa).

The 208-residue stretch at 66-273 folds into the HD domain; that stretch reads RLTHSLEVQQ…MEAADDISYC (208 aa).

This sequence belongs to the dGTPase family. Type 1 subfamily. In terms of assembly, homotetramer. Mg(2+) is required as a cofactor.

The enzyme catalyses dGTP + H2O = 2'-deoxyguanosine + triphosphate + H(+). Functionally, dGTPase preferentially hydrolyzes dGTP over the other canonical NTPs. This chain is Deoxyguanosinetriphosphate triphosphohydrolase, found in Klebsiella pneumoniae (strain 342).